The following is a 308-amino-acid chain: 4-hydroxyproline 2-epimerase (308 aa).

Cysteine 88 functions as the Proton acceptor in the catalytic mechanism. Residues 89–90 (GH), histidine 208, and aspartate 232 contribute to the substrate site. The active-site Proton donor is the cysteine 236. 237–238 (GT) contacts substrate.

This sequence belongs to the proline racemase family.

The enzyme catalyses trans-4-hydroxy-L-proline = cis-4-hydroxy-D-proline. Its function is as follows. Catalyzes the reversible epimerization of cis-4-hydroxy-D-proline (c4DHyp) to trans-4-hydroxy-L-proline (t4LHyp). May be involved in a degradation pathway that allows P.putida strain KT2440 to grow on either epimer of 4-hydroxyproline, c4DHyp and t4LHyp, as the sole carbon and nitrogen source. Does not exhibit measureable racemase activity in vitro with any of the 19 natural chiral amino acid enantiomers. The protein is 4-hydroxyproline 2-epimerase of Pseudomonas putida (strain ATCC 47054 / DSM 6125 / CFBP 8728 / NCIMB 11950 / KT2440).